Consider the following 507-residue polypeptide: Protein phosphatase 1J (507 aa).

Disordered regions lie at residues 1–102 (MLNR…RLPW) and 197–220 (LCLP…PQSC). Residues 14-23 (SSGGTSSQRS) are compositionally biased toward low complexity. Thr-41 bears the Phosphothreonine mark. The segment covering 59 to 73 (TAETTVSFSRPTFLQ) has biased composition (polar residues). Residues Ser-65 and Ser-75 each carry the phosphoserine modification. The 397-residue stretch at 103–499 (STGYAEVINA…DDISVFVIPL (397 aa)) folds into the PPM-type phosphatase domain. Positions 199 to 212 (LPSTPGTPGAPSPS) are enriched in low complexity.

It belongs to the PP2C family. As to quaternary structure, interacts with UBE2I/UBC9. In terms of tissue distribution, specifically expressed in the testicular germ cells.

The enzyme catalyses O-phospho-L-seryl-[protein] + H2O = L-seryl-[protein] + phosphate. It carries out the reaction O-phospho-L-threonyl-[protein] + H2O = L-threonyl-[protein] + phosphate. The polypeptide is Protein phosphatase 1J (Ppm1j) (Mus musculus (Mouse)).